The chain runs to 201 residues: 3-isopropylmalate dehydratase small subunit (201 aa).

Belongs to the LeuD family. LeuD type 1 subfamily. Heterodimer of LeuC and LeuD.

The enzyme catalyses (2R,3S)-3-isopropylmalate = (2S)-2-isopropylmalate. It functions in the pathway amino-acid biosynthesis; L-leucine biosynthesis; L-leucine from 3-methyl-2-oxobutanoate: step 2/4. Catalyzes the isomerization between 2-isopropylmalate and 3-isopropylmalate, via the formation of 2-isopropylmaleate. In Salmonella arizonae (strain ATCC BAA-731 / CDC346-86 / RSK2980), this protein is 3-isopropylmalate dehydratase small subunit.